The primary structure comprises 311 residues: Malate dehydrogenase (311 aa).

Residues 7-13 (GAAGGIG) and aspartate 34 each bind NAD(+). 2 residues coordinate substrate: arginine 81 and arginine 87. NAD(+) contacts are provided by residues asparagine 94 and 117–119 (ITN). Residues asparagine 119 and arginine 153 each coordinate substrate. The active-site Proton acceptor is the histidine 177. Methionine 227 is a binding site for NAD(+).

Belongs to the LDH/MDH superfamily. MDH type 1 family. Homodimer.

The enzyme catalyses (S)-malate + NAD(+) = oxaloacetate + NADH + H(+). Catalyzes the reversible oxidation of malate to oxaloacetate. The protein is Malate dehydrogenase of Aliivibrio salmonicida (strain LFI1238) (Vibrio salmonicida (strain LFI1238)).